The primary structure comprises 368 residues: 4-hydroxy-3-methylbut-2-en-1-yl diphosphate synthase (flavodoxin) (368 aa).

Residues Cys-271, Cys-274, Cys-306, and Glu-313 each contribute to the [4Fe-4S] cluster site.

The protein belongs to the IspG family. [4Fe-4S] cluster is required as a cofactor.

The enzyme catalyses (2E)-4-hydroxy-3-methylbut-2-enyl diphosphate + oxidized [flavodoxin] + H2O + 2 H(+) = 2-C-methyl-D-erythritol 2,4-cyclic diphosphate + reduced [flavodoxin]. Its pathway is isoprenoid biosynthesis; isopentenyl diphosphate biosynthesis via DXP pathway; isopentenyl diphosphate from 1-deoxy-D-xylulose 5-phosphate: step 5/6. Its function is as follows. Converts 2C-methyl-D-erythritol 2,4-cyclodiphosphate (ME-2,4cPP) into 1-hydroxy-2-methyl-2-(E)-butenyl 4-diphosphate. The polypeptide is 4-hydroxy-3-methylbut-2-en-1-yl diphosphate synthase (flavodoxin) (Haemophilus influenzae (strain 86-028NP)).